The primary structure comprises 171 residues: Large ribosomal subunit protein uL5 (171 aa).

Belongs to the universal ribosomal protein uL5 family. In terms of assembly, part of the 50S ribosomal subunit; contacts the 5S rRNA and probably tRNA. Forms a bridge to the 30S subunit in the 70S ribosome.

In terms of biological role, this is one of the proteins that bind and probably mediate the attachment of the 5S RNA into the large ribosomal subunit, where it forms part of the central protuberance. In the 70S ribosome it contacts protein S13 of the 30S subunit (bridge B1b), connecting the 2 subunits; this bridge is implicated in subunit movement. May contact the P site tRNA; the 5S rRNA and some of its associated proteins might help stabilize positioning of ribosome-bound tRNAs. In Methanocorpusculum labreanum (strain ATCC 43576 / DSM 4855 / Z), this protein is Large ribosomal subunit protein uL5.